A 137-amino-acid polypeptide reads, in one-letter code: Ribonuclease VapC18 (137 aa).

A PINc domain is found at 4–126; it reads CVDTSAWHHA…YDRVAAITGQ (123 aa). Positions 6 and 96 each coordinate Mg(2+).

The protein belongs to the PINc/VapC protein family. It depends on Mg(2+) as a cofactor.

In terms of biological role, toxic component of a type II toxin-antitoxin (TA) system. An RNase. The cognate antitoxin is VapB18. In Mycobacterium tuberculosis (strain ATCC 25618 / H37Rv), this protein is Ribonuclease VapC18.